The primary structure comprises 655 residues: FYVE, RhoGEF and PH domain-containing protein 2 (655 aa).

Phosphoserine occurs at positions 10, 39, and 47. 2 disordered regions span residues 21 to 52 and 84 to 103; these read NRTP…EPWE and WRRS…EPEE. The segment covering 32-41 has biased composition (basic and acidic residues); the sequence is SLEDQPHSPE. A DH domain is found at 102–290; the sequence is EEKRVVRELL…FSAAQHSNAA (189 aa). In terms of domain architecture, PH 1 spans 319-418; that stretch reads TLLREGPVLK…WMQACQAAID (100 aa). The segment at 458-518 adopts an FYVE-type zinc-finger fold; sequence DKMVTMCMRC…VCLTCYTFLT (61 aa). Zn(2+)-binding residues include Cys464, Cys467, Cys481, Cys484, Cys489, Cys492, Cys510, and Cys513. Positions 544-641 constitute a PH 2 domain; sequence QSLVCSFLQL…WVTAIKRAAS (98 aa). Thr644 carries the phosphothreonine modification. Ser654 is modified (phosphoserine).

Lymph node, spleen, B-lymphocytes and macrophages (at protein level). Expressed at high levels in lymph node, spleen, B-lymphocytes and bone marrow macrophages. Expressed at lower levels in mature bone marrow dendritic cells. In both immature and mature B-cells, expression is down-regulated by prior B-cell receptor signaling. Expression remains high in resting B and memory cells but declines upon differentiation into plasma cells.

The protein localises to the cytoplasm. It is found in the nucleus. It localises to the early endosome. Its subcellular location is the early endosome membrane. The protein resides in the cell projection. The protein localises to the ruffle membrane. It is found in the cytoskeleton. In terms of biological role, activates CDC42, a member of the Ras-like family of Rho- and Rac proteins, by exchanging bound GDP for free GTP. Activates JNK1 via CDC42 but not RAC1. Binds to phosphatidylinositol 4,5-bisphosphate, phosphatidylinositol 3,4,5-trisphosphate, phosphatidylinositol 5-monophosphate, phosphatidylinositol 4-monophosphate and phosphatidylinositol 3-monophosphate. The polypeptide is FYVE, RhoGEF and PH domain-containing protein 2 (Fgd2) (Mus musculus (Mouse)).